A 158-amino-acid chain; its full sequence is 6,7-dimethyl-8-ribityllumazine synthase (158 aa).

5-amino-6-(D-ribitylamino)uracil contacts are provided by residues phenylalanine 24, 58–60 (AFE), and 82–84 (AVI). A (2S)-2-hydroxy-3-oxobutyl phosphate-binding site is contributed by 87-88 (GT). Histidine 90 acts as the Proton donor in catalysis. Phenylalanine 115 lines the 5-amino-6-(D-ribitylamino)uracil pocket. Arginine 129 provides a ligand contact to (2S)-2-hydroxy-3-oxobutyl phosphate.

It belongs to the DMRL synthase family. Forms an icosahedral capsid composed of 60 subunits, arranged as a dodecamer of pentamers.

It carries out the reaction (2S)-2-hydroxy-3-oxobutyl phosphate + 5-amino-6-(D-ribitylamino)uracil = 6,7-dimethyl-8-(1-D-ribityl)lumazine + phosphate + 2 H2O + H(+). It participates in cofactor biosynthesis; riboflavin biosynthesis; riboflavin from 2-hydroxy-3-oxobutyl phosphate and 5-amino-6-(D-ribitylamino)uracil: step 1/2. Functionally, catalyzes the formation of 6,7-dimethyl-8-ribityllumazine by condensation of 5-amino-6-(D-ribitylamino)uracil with 3,4-dihydroxy-2-butanone 4-phosphate. This is the penultimate step in the biosynthesis of riboflavin. In Azotobacter vinelandii (strain DJ / ATCC BAA-1303), this protein is 6,7-dimethyl-8-ribityllumazine synthase.